The sequence spans 303 residues: Probable cat1 operon transcriptional activator (303 aa).

The HTH lysR-type domain occupies M1–T58. Positions F18 to Q37 form a DNA-binding region, H-T-H motif.

This sequence belongs to the LysR transcriptional regulatory family.

In terms of biological role, probable positive regulator of the cat1 operon which encode enzymes responsible for the degradation of catechol to acetyl-CoA via the beta-ketoadipate pathway. The polypeptide is Probable cat1 operon transcriptional activator (Acinetobacter lwoffii).